The chain runs to 424 residues: Spore coat protein SP60 (424 aa).

The signal sequence occupies residues 1 to 23 (MKILSLLVVGALCMGGKVYGEVN). 6 consecutive Follistatin-like domains span residues 52-74 (DCSTLQCPPRYHCEVNNGNRQCV), 85-109 (KCDNVHCPKGFNCKYDWEKDLALCV), 117-139 (VCRTRCPEGHECKVDEWGKECCV), 184-206 (ICRLRCPPGHECKHDEHGKECCV), 215-234 (DLKCKRGYECKIKHDGSKCC), and 299-322 (RCDDVECPDFHRCVERRGGILSCE). Residues 330 to 424 (RSLDWAENEN…FQDANDEWDY (95 aa)) are disordered. 2 stretches are compositionally biased toward acidic residues: residues 335–357 (AENENDDRDYDDRDYDDDEYDGD) and 365–424 (YDGD…EWDY).

The polypeptide is Spore coat protein SP60 (cotC) (Dictyostelium discoideum (Social amoeba)).